The following is a 314-amino-acid chain: Ribosomal RNA small subunit methyltransferase H 2 (314 aa).

S-adenosyl-L-methionine-binding positions include 33-35 (AGH), D53, Y80, D101, and Q108. The interval 293 to 314 (KELEENSRSKSAKLRVFEKNDL) is disordered.

The protein belongs to the methyltransferase superfamily. RsmH family.

It is found in the cytoplasm. It catalyses the reaction cytidine(1402) in 16S rRNA + S-adenosyl-L-methionine = N(4)-methylcytidine(1402) in 16S rRNA + S-adenosyl-L-homocysteine + H(+). In terms of biological role, specifically methylates the N4 position of cytidine in position 1402 (C1402) of 16S rRNA. The chain is Ribosomal RNA small subunit methyltransferase H 2 from Agathobacter rectalis (strain ATCC 33656 / DSM 3377 / JCM 17463 / KCTC 5835 / VPI 0990) (Eubacterium rectale).